Consider the following 468-residue polypeptide: Citrate synthase, mitochondrial (468 aa).

The transit peptide at 1–30 (MSFLSISRLAPRLLSSKNAACVVVAARNAS) directs the protein to the mitochondrion. Catalysis depends on residues His303 and His349. Residue Arg358 coordinates oxaloacetate. Residue Asp404 is part of the active site. Oxaloacetate is bound by residues Arg430 and Arg450.

This sequence belongs to the citrate synthase family. In terms of assembly, homodimer.

It is found in the mitochondrion matrix. It catalyses the reaction oxaloacetate + acetyl-CoA + H2O = citrate + CoA + H(+). The protein operates within carbohydrate metabolism; tricarboxylic acid cycle; isocitrate from oxaloacetate: step 1/2. Key enzyme of the Krebs tricarboxylic acid cycle which catalyzes the synthesis of citrate from acetyl coenzyme A and oxaloacetate. The protein is Citrate synthase, mitochondrial (cs) of Danio rerio (Zebrafish).